Reading from the N-terminus, the 354-residue chain is Type II secretion system protein K (354 aa).

The propeptide at 1 to 7 is leader sequence; it reads MSRRQRG. Residues 8–28 form a helical membrane-spanning segment; that stretch reads VALLIVMLMLSLMVTIAASIT. Topologically, residues 29-354 are periplasmic; that stretch reads ERSGKAWQRT…QYGGYRTVNP (326 aa). Residues 114–151 are disordered; sequence NVTPNNASGNNTSGNNNAANGSSGNGNSPQPPKVGTSE. A compositionally biased stretch (low complexity) spans 118 to 141; sequence NNASGNNTSGNNNAANGSSGNGNS.

It belongs to the GSP K family. As to quaternary structure, type II secretion is composed of four main components: the outer membrane complex, the inner membrane complex, the cytoplasmic secretion ATPase and the periplasm-spanning pseudopilus. Interacts with core component OutG. In terms of processing, cleaved by prepilin peptidase.

It localises to the cell inner membrane. Functionally, component of the type II secretion system required for the energy-dependent secretion of extracellular factors such as proteases and toxins from the periplasm. Plays a role in pseudopilus assembly and seems to control its length. Interacts with the pseudopilus tip complex that is critical for the recognition and binding of secretion substrates. The protein is Type II secretion system protein K (outK) of Dickeya chrysanthemi (Pectobacterium chrysanthemi).